A 250-amino-acid chain; its full sequence is Ribonuclease PH (250 aa).

Phosphate-binding positions include Arg86 and 124–126 (GTR).

It belongs to the RNase PH family. Homohexameric ring arranged as a trimer of dimers.

It carries out the reaction tRNA(n+1) + phosphate = tRNA(n) + a ribonucleoside 5'-diphosphate. Its function is as follows. Phosphorolytic 3'-5' exoribonuclease that plays an important role in tRNA 3'-end maturation. Removes nucleotide residues following the 3'-CCA terminus of tRNAs; can also add nucleotides to the ends of RNA molecules by using nucleoside diphosphates as substrates, but this may not be physiologically important. Probably plays a role in initiation of 16S rRNA degradation (leading to ribosome degradation) during starvation. The sequence is that of Ribonuclease PH from Shouchella clausii (strain KSM-K16) (Alkalihalobacillus clausii).